A 179-amino-acid chain; its full sequence is GTP-dependent dephospho-CoA kinase (179 aa).

GTP is bound by residues Asp43, Val45, Asp62, Glu120, and Asp143.

The protein belongs to the GTP-dependent DPCK family.

It carries out the reaction 3'-dephospho-CoA + GTP = GDP + CoA + H(+). It participates in cofactor biosynthesis; coenzyme A biosynthesis. Functionally, catalyzes the GTP-dependent phosphorylation of the 3'-hydroxyl group of dephosphocoenzyme A to form coenzyme A (CoA). This chain is GTP-dependent dephospho-CoA kinase, found in Haloarcula marismortui (strain ATCC 43049 / DSM 3752 / JCM 8966 / VKM B-1809) (Halobacterium marismortui).